A 201-amino-acid chain; its full sequence is FMN-dependent NADH:quinone oxidoreductase (201 aa).

Residues serine 9 and 16–18 contribute to the FMN site; that span reads SYS.

The protein belongs to the azoreductase type 1 family. Homodimer. It depends on FMN as a cofactor.

It carries out the reaction 2 a quinone + NADH + H(+) = 2 a 1,4-benzosemiquinone + NAD(+). It catalyses the reaction N,N-dimethyl-1,4-phenylenediamine + anthranilate + 2 NAD(+) = 2-(4-dimethylaminophenyl)diazenylbenzoate + 2 NADH + 2 H(+). In terms of biological role, quinone reductase that provides resistance to thiol-specific stress caused by electrophilic quinones. Its function is as follows. Also exhibits azoreductase activity. Catalyzes the reductive cleavage of the azo bond in aromatic azo compounds to the corresponding amines. This Mesomycoplasma hyopneumoniae (strain J / ATCC 25934 / NCTC 10110) (Mycoplasma hyopneumoniae) protein is FMN-dependent NADH:quinone oxidoreductase.